The following is a 343-amino-acid chain: Delta(1)-pyrroline-2-carboxylate/Delta(1)-piperideine-2-carboxylate reductase (343 aa).

The Charge relay system role is filled by Ser53. His54 acts as the Proton donor in catalysis. Arg58 is a binding site for substrate. 126–130 (HFAAL) serves as a coordination point for NADP(+). Substrate is bound at residue Thr166. 184-186 (DLA) contacts NADP(+). Residue 192-193 (HG) coordinates substrate. The active-site Charge relay system is the Asp194. Residues 236–237 (HK) and 309–315 (RLPGDRR) each bind NADP(+).

The protein belongs to the LDH2/MDH2 oxidoreductase family. As to quaternary structure, homodimer.

It catalyses the reaction L-pipecolate + NADP(+) = Delta(1)-piperideine-2-carboxylate + NADPH + H(+). The catalysed reaction is L-proline + NADP(+) = 1-pyrroline-2-carboxylate + NADPH + H(+). It carries out the reaction N-methyl-L-alanine + NADP(+) + H2O = methylamine + pyruvate + NADPH + H(+). Is inhibited by the substrate analog pyrrole-2-carboxylate, and by 2-picolinate. Catalyzes the reduction of both Delta(1)-pyrroline-2-carboxylate (Pyr2C) and Delta(1)-piperideine-2-carboxylate (Pip2C) to L-proline and L-pipecolate, respectively, using NADPH as the electron donor. Can catalyze the reverse oxidation reactions, albeit at a much lower rate. Is also able to catalyze in vitro the NADPH-dependent formation of N-methylalanine from pyruvate and N-methylamine; can act on other alpha-keto acids and specifically uses methylamine and not ammonia for these reductive amination reactions. Can use NADH instead of NADPH, although with much less efficiency. In Pseudomonas syringae pv. tomato, this protein is Delta(1)-pyrroline-2-carboxylate/Delta(1)-piperideine-2-carboxylate reductase.